The primary structure comprises 202 residues: tRNA (pseudouridine(54)-N(1))-methyltransferase (202 aa).

S-adenosyl-L-methionine contacts are provided by Leu134 and Gly155.

Belongs to the methyltransferase superfamily. TrmY family. Homodimer.

Its subcellular location is the cytoplasm. It carries out the reaction pseudouridine(54) in tRNA + S-adenosyl-L-methionine = N(1)-methylpseudouridine(54) in tRNA + S-adenosyl-L-homocysteine + H(+). Specifically catalyzes the N1-methylation of pseudouridine at position 54 (Psi54) in tRNAs. The chain is tRNA (pseudouridine(54)-N(1))-methyltransferase from Thermococcus gammatolerans (strain DSM 15229 / JCM 11827 / EJ3).